A 283-amino-acid polypeptide reads, in one-letter code: Gap junction beta-1 protein (283 aa).

Over 1–22 (MNWTGLYTLLSGVNRHSTAIGR) the chain is Cytoplasmic. The chain crosses the membrane as a helical span at residues 23-45 (VWLSVIFIFRIMVLVVAAESVWG). Residues 46–75 (DEKSSFICNTLQPGCNSVCYDHFFPISHVR) are Extracellular-facing. A helical transmembrane segment spans residues 76 to 95 (LWSLQLILVSTPALLVAMHV). At 96 to 130 (AHQQHIEKKMLRLEGHGDPLHLEEVKRHKVHISGT) the chain is on the cytoplasmic side. A helical transmembrane segment spans residues 131–153 (LWWTYVISVVFRLLFEAVFMYVF). The Extracellular portion of the chain corresponds to 154-191 (YLLYPGYAMVRLVKCEAFPCPNTVDCFVSRPTEKTVFT). The helical transmembrane segment at 192-214 (VFMLAASGICIILNVAEVVYLII) threads the bilayer. Residues 215 to 283 (RACARRAQRR…AEKSDRCSAC (69 aa)) lie on the Cytoplasmic side of the membrane. Ser233, Ser258, Ser266, and Ser277 each carry phosphoserine.

It belongs to the connexin family. Beta-type (group I) subfamily. In terms of assembly, a connexon is composed of a hexamer of connexins. Interacts with CNST.

Its subcellular location is the cell membrane. It localises to the cell junction. It is found in the gap junction. Its function is as follows. One gap junction consists of a cluster of closely packed pairs of transmembrane channels, the connexons, through which materials of low MW diffuse from one cell to a neighboring cell. The protein is Gap junction beta-1 protein (Gjb1) of Mus musculus (Mouse).